Reading from the N-terminus, the 485-residue chain is Glutamyl-tRNA(Gln) amidotransferase subunit A (485 aa).

Residues lysine 79 and serine 154 each act as charge relay system in the active site. Serine 178 functions as the Acyl-ester intermediate in the catalytic mechanism.

This sequence belongs to the amidase family. GatA subfamily. As to quaternary structure, heterotrimer of A, B and C subunits.

It carries out the reaction L-glutamyl-tRNA(Gln) + L-glutamine + ATP + H2O = L-glutaminyl-tRNA(Gln) + L-glutamate + ADP + phosphate + H(+). In terms of biological role, allows the formation of correctly charged Gln-tRNA(Gln) through the transamidation of misacylated Glu-tRNA(Gln) in organisms which lack glutaminyl-tRNA synthetase. The reaction takes place in the presence of glutamine and ATP through an activated gamma-phospho-Glu-tRNA(Gln). The polypeptide is Glutamyl-tRNA(Gln) amidotransferase subunit A (Staphylococcus carnosus (strain TM300)).